The primary structure comprises 100 residues: Urease subunit gamma (100 aa).

Belongs to the urease gamma subunit family. In terms of assembly, heterotrimer of UreA (gamma), UreB (beta) and UreC (alpha) subunits. Three heterotrimers associate to form the active enzyme.

The protein localises to the cytoplasm. It carries out the reaction urea + 2 H2O + H(+) = hydrogencarbonate + 2 NH4(+). It functions in the pathway nitrogen metabolism; urea degradation; CO(2) and NH(3) from urea (urease route): step 1/1. The polypeptide is Urease subunit gamma (Paraburkholderia phymatum (strain DSM 17167 / CIP 108236 / LMG 21445 / STM815) (Burkholderia phymatum)).